We begin with the raw amino-acid sequence, 302 residues long: RNA polymerase II holoenzyme cyclin-like subunit (302 aa).

Residues 53–142 enclose the Cyclin N-terminal domain; the sequence is QQLIKLGKRM…VGECEFSLIS (90 aa).

It belongs to the cyclin family. Cyclin C subfamily. As to quaternary structure, component of the srb8-11 complex, a regulatory module of the Mediator complex.

The protein resides in the nucleus. Its function is as follows. Component of the srb8-11 complex. The srb8-11 complex is a regulatory module of the Mediator complex which is itself involved in regulation of basal and activated RNA polymerase II-dependent transcription. The srb8-11 complex may be involved in the transcriptional repression of a subset of genes regulated by Mediator. It may inhibit the association of the Mediator complex with RNA polymerase II to form the holoenzyme complex. The srb8-11 complex phosphorylates the C-terminal domain (CTD) of the largest subunit of RNA polymerase II. This is RNA polymerase II holoenzyme cyclin-like subunit (ssn8) from Emericella nidulans (strain FGSC A4 / ATCC 38163 / CBS 112.46 / NRRL 194 / M139) (Aspergillus nidulans).